A 224-amino-acid polypeptide reads, in one-letter code: Peptidyl-prolyl cis-trans isomerase FKBP3 (224 aa).

At A2 the chain carries N-acetylalanine. S36 is modified (phosphoserine). The segment at 88-118 (VKLSDDKPKDSKSEETLDEGPPKYTKSILKK) is disordered. Positions 89–102 (KLSDDKPKDSKSEE) are enriched in basic and acidic residues. Residue K99 is modified to N6-acetyllysine. The PPIase FKBP-type domain maps to 128–224 (GDVVHCWYTG…IFEVELVDID (97 aa)). Phosphoserine is present on S152. K170 bears the N6-acetyllysine mark.

Belongs to the FKBP-type PPIase family.

The protein localises to the nucleus. It catalyses the reaction [protein]-peptidylproline (omega=180) = [protein]-peptidylproline (omega=0). With respect to regulation, inhibited preferentially by rapamycin over FK506. FK506- and rapamycin-binding proteins (FKBPs) constitute a family of receptors for the two immunosuppressants which inhibit T-cell proliferation by arresting two distinct cytoplasmic signal transmission pathways. PPIases accelerate the folding of proteins. In Mus musculus (Mouse), this protein is Peptidyl-prolyl cis-trans isomerase FKBP3 (Fkbp3).